Reading from the N-terminus, the 478-residue chain is MNKKIQDFFLSCKECILENPRSFYGSFSLGPFKNSQSLTVANALRRTLLAELSNIAITHLEIEGVTHEYSTLVGVRESVLDLLLNFKGIALKNTSPVTKPLFGYLQVRGPGVVRASDLKFPPMIQCVDPDQYIATLNENGKLILKFRISDFKNSQENLNFEVSKTFLNIPNFGHFDTSSFQNFENSNFFSSSFFASQKMIKSKRKTKFSQLKVDYLSSFGFSTQHKRSGLNQTQKFAMQHQNPFRIEKNQQDFNKNKNGNFDSQKNKTNSLWVDPLFNPILKVNYIIETIEPMQKNIPNEIVFIELWTNGSIHPRKAFYTALLYLKTMFDKLDCMRLLNYEFSNTMLESEKTSTKFFKTFEYDFRFYNSREDKTMKSFTPEKFFLPEEIEDVEKDYLLNLKNQADNTWNDLPLTNLNLPYRITKILAKNNFFVVGDLLKISPNELKKLSGIGNYCVFILQKRFEKLGLKLGSRNEKNL.

The alpha N-terminal domain (alpha-NTD) stretch occupies residues 1–341 (MNKKIQDFFL…LDCMRLLNYE (341 aa)). Residues 365-478 (RFYNSREDKT…KLGSRNEKNL (114 aa)) are alpha C-terminal domain (alpha-CTD).

Belongs to the RNA polymerase alpha chain family. In plastids the minimal PEP RNA polymerase catalytic core is composed of four subunits: alpha, beta, beta', and beta''. When a (nuclear-encoded) sigma factor is associated with the core the holoenzyme is formed, which can initiate transcription.

The protein resides in the plastid. Its subcellular location is the chloroplast. The enzyme catalyses RNA(n) + a ribonucleoside 5'-triphosphate = RNA(n+1) + diphosphate. Its function is as follows. DNA-dependent RNA polymerase catalyzes the transcription of DNA into RNA using the four ribonucleoside triphosphates as substrates. This Tetradesmus obliquus (Green alga) protein is DNA-directed RNA polymerase subunit alpha (rpoA).